The following is a 436-amino-acid chain: 3-ketoacyl-CoA thiolase (436 aa).

C99 serves as the catalytic Acyl-thioester intermediate. Residues H392 and C422 each act as proton acceptor in the active site.

It belongs to the thiolase-like superfamily. Thiolase family. As to quaternary structure, heterotetramer of two alpha chains (FadJ) and two beta chains (FadI).

The protein localises to the cytoplasm. It carries out the reaction an acyl-CoA + acetyl-CoA = a 3-oxoacyl-CoA + CoA. It functions in the pathway lipid metabolism; fatty acid beta-oxidation. Functionally, catalyzes the final step of fatty acid oxidation in which acetyl-CoA is released and the CoA ester of a fatty acid two carbons shorter is formed. In Escherichia coli O81 (strain ED1a), this protein is 3-ketoacyl-CoA thiolase.